Reading from the N-terminus, the 230-residue chain is UPF0500 protein C1orf216 homolog (230 aa).

Residues 1-103 (MFAAIQPGLA…AEPEKLSGAS (103 aa)) form a disordered region. A compositionally biased stretch (polar residues) spans 60-73 (RSSSESPSDNQVFQ). The span at 85-94 (PPEGAEIPGA) shows a compositional bias: low complexity.

The protein belongs to the UPF0500 family.

This chain is UPF0500 protein C1orf216 homolog, found in Mus musculus (Mouse).